The following is a 610-amino-acid chain: UvrABC system protein C (610 aa).

Residues 16–94 (SQPGVYRMYD…IKLYQPRYNV (79 aa)) form the GIY-YIG domain. In terms of domain architecture, UVR spans 204–239 (QQVLNQLISRMESASRDLRFEDAARIRDQIQAVRRV).

The protein belongs to the UvrC family. Interacts with UvrB in an incision complex.

It localises to the cytoplasm. Its function is as follows. The UvrABC repair system catalyzes the recognition and processing of DNA lesions. UvrC both incises the 5' and 3' sides of the lesion. The N-terminal half is responsible for the 3' incision and the C-terminal half is responsible for the 5' incision. This chain is UvrABC system protein C, found in Pectobacterium atrosepticum (strain SCRI 1043 / ATCC BAA-672) (Erwinia carotovora subsp. atroseptica).